We begin with the raw amino-acid sequence, 37 residues long: Photosystem I reaction center subunit VIII (37 aa).

Residues 7-27 (LPAIFVPLVGLVFPAIAMVSL) traverse the membrane as a helical segment.

This sequence belongs to the PsaI family.

The protein localises to the plastid. The protein resides in the chloroplast thylakoid membrane. Functionally, may help in the organization of the PsaL subunit. The polypeptide is Photosystem I reaction center subunit VIII (Morus indica (Mulberry)).